The primary structure comprises 438 residues: L-cysteine:1D-myo-inositol 2-amino-2-deoxy-alpha-D-glucopyranoside ligase (438 aa).

Residues 1 to 27 (MDSWTSPDVPALPFTAEGPRVHDTARG) are disordered. C45 provides a ligand contact to Zn(2+). L-cysteinyl-5'-AMP contacts are provided by residues 45 to 48 (CGIT), T60, and 83 to 85 (NVT). Positions 47-57 (ITPYDATHLGH) match the 'HIGH' region motif. The short motif at 197–202 (DRGGDP) is the 'ERGGDP' region element. W238 is an L-cysteinyl-5'-AMP binding site. C242 lines the Zn(2+) pocket. L-cysteinyl-5'-AMP is bound at residue 260-262 (GDD). Residue H267 participates in Zn(2+) binding. V293 is an L-cysteinyl-5'-AMP binding site. The 'KMSKS' region signature appears at 299-303 (KMSKS).

The protein belongs to the class-I aminoacyl-tRNA synthetase family. MshC subfamily. As to quaternary structure, monomer. Requires Zn(2+) as cofactor.

It catalyses the reaction 1D-myo-inositol 2-amino-2-deoxy-alpha-D-glucopyranoside + L-cysteine + ATP = 1D-myo-inositol 2-(L-cysteinylamino)-2-deoxy-alpha-D-glucopyranoside + AMP + diphosphate + H(+). Its function is as follows. Catalyzes the ATP-dependent condensation of GlcN-Ins and L-cysteine to form L-Cys-GlcN-Ins. The protein is L-cysteine:1D-myo-inositol 2-amino-2-deoxy-alpha-D-glucopyranoside ligase of Kytococcus sedentarius (strain ATCC 14392 / DSM 20547 / JCM 11482 / CCUG 33030 / NBRC 15357 / NCTC 11040 / CCM 314 / 541) (Micrococcus sedentarius).